An 88-amino-acid polypeptide reads, in one-letter code: Large ribosomal subunit protein bL27 (88 aa).

The tract at residues 1–21 (MAHKKAGGSSRNGRDSDGRRL) is disordered.

It belongs to the bacterial ribosomal protein bL27 family.

This chain is Large ribosomal subunit protein bL27, found in Methylobacterium nodulans (strain LMG 21967 / CNCM I-2342 / ORS 2060).